The following is a 307-amino-acid chain: UDP-3-O-acyl-N-acetylglucosamine deacetylase (307 aa).

The Zn(2+) site is built by His78, His241, and Asp245. The Proton donor role is filled by His268.

The protein belongs to the LpxC family. It depends on Zn(2+) as a cofactor.

The catalysed reaction is a UDP-3-O-[(3R)-3-hydroxyacyl]-N-acetyl-alpha-D-glucosamine + H2O = a UDP-3-O-[(3R)-3-hydroxyacyl]-alpha-D-glucosamine + acetate. It participates in glycolipid biosynthesis; lipid IV(A) biosynthesis; lipid IV(A) from (3R)-3-hydroxytetradecanoyl-[acyl-carrier-protein] and UDP-N-acetyl-alpha-D-glucosamine: step 2/6. Its function is as follows. Catalyzes the hydrolysis of UDP-3-O-myristoyl-N-acetylglucosamine to form UDP-3-O-myristoylglucosamine and acetate, the committed step in lipid A biosynthesis. The polypeptide is UDP-3-O-acyl-N-acetylglucosamine deacetylase (Variovorax paradoxus (strain S110)).